The following is a 974-amino-acid chain: Translation initiation factor IF-2 (974 aa).

3 disordered regions span residues 67-86 (TRKH…ARTI), 101-133 (DVAE…RREA), and 146-385 (RQER…TFQA). Over residues 105–114 (GAEQGQAQVA) the composition is skewed to low complexity. Basic and acidic residues-rich tracts occupy residues 121–133 (ELKR…RREA) and 146–181 (RQER…KRAA). Over residues 182–197 (AEAAAAQQAAAQQAAE) the composition is skewed to low complexity. Residues 210–261 (EEARAAAERAAQREAAKKAEDAAREAADKARAEQEEIRKRREAAEAEARAIR) are compositionally biased toward basic and acidic residues. Residues 313-329 (PAGATPATTQAPAAGAG) are compositionally biased toward low complexity. A compositionally biased stretch (gly residues) spans 358 to 371 (SSGGVDRGWRGGPK). One can recognise a tr-type G domain in the interval 474 to 643 (PRPPVVTVMG…LLQAEVLELK (170 aa)). The tract at residues 483 to 490 (GHVDHGKT) is G1. 483–490 (GHVDHGKT) contacts GTP. A G2 region spans residues 508 to 512 (GITQH). The G3 stretch occupies residues 529-532 (DTPG). GTP is bound by residues 529–533 (DTPGH) and 583–586 (NKID). Residues 583–586 (NKID) form a G4 region. The tract at residues 619-621 (SAK) is G5.

Belongs to the TRAFAC class translation factor GTPase superfamily. Classic translation factor GTPase family. IF-2 subfamily.

The protein localises to the cytoplasm. Functionally, one of the essential components for the initiation of protein synthesis. Protects formylmethionyl-tRNA from spontaneous hydrolysis and promotes its binding to the 30S ribosomal subunits. Also involved in the hydrolysis of GTP during the formation of the 70S ribosomal complex. The protein is Translation initiation factor IF-2 of Burkholderia vietnamiensis (strain G4 / LMG 22486) (Burkholderia cepacia (strain R1808)).